Consider the following 470-residue polypeptide: Glutamate--tRNA ligase (470 aa).

The 'HIGH' region motif lies at 9 to 19; it reads PSPTGFLHVGG. A 'KMSKS' region motif is present at residues 236-240; that stretch reads RLSKR. Lysine 239 is an ATP binding site.

Belongs to the class-I aminoacyl-tRNA synthetase family. Glutamate--tRNA ligase type 1 subfamily. Monomer.

It localises to the cytoplasm. It catalyses the reaction tRNA(Glu) + L-glutamate + ATP = L-glutamyl-tRNA(Glu) + AMP + diphosphate. Catalyzes the attachment of glutamate to tRNA(Glu) in a two-step reaction: glutamate is first activated by ATP to form Glu-AMP and then transferred to the acceptor end of tRNA(Glu). This chain is Glutamate--tRNA ligase, found in Legionella pneumophila (strain Lens).